Reading from the N-terminus, the 460-residue chain is Argininosuccinate lyase (460 aa).

This sequence belongs to the lyase 1 family. Argininosuccinate lyase subfamily.

The protein localises to the cytoplasm. The enzyme catalyses 2-(N(omega)-L-arginino)succinate = fumarate + L-arginine. Its pathway is amino-acid biosynthesis; L-arginine biosynthesis; L-arginine from L-ornithine and carbamoyl phosphate: step 3/3. The protein is Argininosuccinate lyase of Edwardsiella ictaluri (strain 93-146).